A 111-amino-acid polypeptide reads, in one-letter code: UPF0060 membrane protein CPR_1507 (111 aa).

Transmembrane regions (helical) follow at residues 7–27, 33–53, 60–80, and 85–105; these read IFYF…IWLW, SLIY…IPTL, FGRV…LCGW, and IIPD…VLII.

Belongs to the UPF0060 family.

The protein localises to the cell membrane. This is UPF0060 membrane protein CPR_1507 from Clostridium perfringens (strain SM101 / Type A).